The sequence spans 37 residues: Cytochrome b6-f complex subunit 5 (37 aa).

Residues Leu-5–Ala-25 traverse the membrane as a helical segment.

This sequence belongs to the PetG family. As to quaternary structure, the 4 large subunits of the cytochrome b6-f complex are cytochrome b6, subunit IV (17 kDa polypeptide, PetD), cytochrome f and the Rieske protein, while the 4 small subunits are PetG, PetL, PetM and PetN. The complex functions as a dimer.

It localises to the plastid. The protein resides in the chloroplast thylakoid membrane. Component of the cytochrome b6-f complex, which mediates electron transfer between photosystem II (PSII) and photosystem I (PSI), cyclic electron flow around PSI, and state transitions. PetG is required for either the stability or assembly of the cytochrome b6-f complex. The protein is Cytochrome b6-f complex subunit 5 of Stigeoclonium helveticum (Green alga).